The chain runs to 364 residues: D-alanine--D-alanine ligase (364 aa).

Residues Lys-134–Thr-344 enclose the ATP-grasp domain. An ATP-binding site is contributed by Asn-167 to Glu-222. Asp-297, Glu-311, and Asn-313 together coordinate Mg(2+).

This sequence belongs to the D-alanine--D-alanine ligase family. Mg(2+) serves as cofactor. The cofactor is Mn(2+).

It is found in the cytoplasm. It carries out the reaction 2 D-alanine + ATP = D-alanyl-D-alanine + ADP + phosphate + H(+). It participates in cell wall biogenesis; peptidoglycan biosynthesis. Functionally, cell wall formation. The protein is D-alanine--D-alanine ligase of Borrelia duttonii (strain Ly).